The following is a 1477-amino-acid chain: Lysine-specific demethylase rbr-2 (1477 aa).

The disordered stretch occupies residues 1-37 (MRARRQENSISTPSAPSTSTSPRKKASIGNSRSKNHG). A compositionally biased stretch (low complexity) spans 9-21 (SISTPSAPSTSTS). A JmjN domain is found at 56 to 97 (APIYYPTEEEFSDPIEYVAKIRHEAEKFGVVKIVPPANFKPP). An ARID domain is found at 121 to 218 (VKEKHTFIDR…HIEPFNRNLK (98 aa)). Residues 222-314 (MKNDDESDDE…KAEGDDDDDE (93 aa)) are disordered. The segment covering 246-259 (MRTEIEVPNDKTTE) has biased composition (basic and acidic residues). Composition is skewed to basic residues over residues 272–283 (GRRRSKNKKASS) and 295–304 (NSTRGRKNKK). The segment at 319–371 (QVFCVACNEGKDEDLLLLCDIDGCNNGRHTYCCDPVLDEVPEGEWRCPKCIES) adopts a PHD-type 1 zinc-finger fold. One can recognise a JmjC domain in the interval 468–634 (QYASHAWNLN…KGRECVESYS (167 aa)). Residues histidine 514, aspartate 517, and histidine 602 each coordinate Fe cation. Residues 874-926 (IIDKLEKWMEQVEMWRNRAKDAIYREQEYSKEEIEKIIEEGDEYDIKLEEIDE) adopt a coiled-coil conformation. Residues 1203-1257 (LEACSCLGFNKSDDSESTLTCIMCDSEFHVRCCEWSPFLEKLPEGCFLCVRCLRG) form a PHD-type 2 zinc finger. The segment at 1375–1404 (TAKRKRPSVSHKETSKKSRKRQSQASPSEY) is disordered. The PHD-type 3 zinc finger occupies 1411–1466 (FKSCQARACLKPYGDSVNWVMCEAGCKNWFHVICLGFTLREINDMHEYRCSSCLDH).

Belongs to the JARID1 histone demethylase family. Fe(2+) serves as cofactor.

The protein localises to the nucleus. The catalysed reaction is N(6),N(6),N(6)-trimethyl-L-lysyl(4)-[histone H3] + 3 2-oxoglutarate + 3 O2 = L-lysyl(4)-[histone H3] + 3 formaldehyde + 3 succinate + 3 CO2. Functionally, histone demethylase that specifically demethylates 'Lys-4' of histone H3, thereby playing a central role in histone code. Does not demethylate histone H3 'Lys-9', H3 'Lys-27', H3 'Lys-36', H3 'Lys-79' or H4 'Lys-20'. Demethylates trimethylated and dimethylated but not monomethylated H3 'Lys-4'. Required for normal longevity of the soma in a germline-dependent manner. Implicated in the epigenetic inheritance of lifespan over several generations. Involved in larval development and vulva formation. The sequence is that of Lysine-specific demethylase rbr-2 (rbr-2) from Caenorhabditis elegans.